A 126-amino-acid polypeptide reads, in one-letter code: Allergen Tha p 1 (126 aa).

Residues 1-18 (MKLLILALTCAAAVWARP) form the signal peptide.

This sequence belongs to the insect A10/OS-D protein family.

It localises to the secreted. This is Allergen Tha p 1 from Thaumetopoea pityocampa (Pine processionary moth).